The chain runs to 172 residues: Adenine phosphoribosyltransferase (172 aa).

This sequence belongs to the purine/pyrimidine phosphoribosyltransferase family. As to quaternary structure, homodimer.

It localises to the cytoplasm. It carries out the reaction AMP + diphosphate = 5-phospho-alpha-D-ribose 1-diphosphate + adenine. It functions in the pathway purine metabolism; AMP biosynthesis via salvage pathway; AMP from adenine: step 1/1. Functionally, catalyzes a salvage reaction resulting in the formation of AMP, that is energically less costly than de novo synthesis. The polypeptide is Adenine phosphoribosyltransferase (Alkaliphilus oremlandii (strain OhILAs) (Clostridium oremlandii (strain OhILAs))).